Reading from the N-terminus, the 294-residue chain is Urease accessory protein UreD (294 aa).

Positions Met-1–Gly-22 are disordered.

This sequence belongs to the UreD family. As to quaternary structure, ureD, UreF and UreG form a complex that acts as a GTP-hydrolysis-dependent molecular chaperone, activating the urease apoprotein by helping to assemble the nickel containing metallocenter of UreC. The UreE protein probably delivers the nickel.

It localises to the cytoplasm. Functionally, required for maturation of urease via the functional incorporation of the urease nickel metallocenter. The protein is Urease accessory protein UreD of Alcanivorax borkumensis (strain ATCC 700651 / DSM 11573 / NCIMB 13689 / SK2).